The chain runs to 338 residues: Probable arabinan endo-1,5-alpha-L-arabinosidase A (338 aa).

Residues 1-20 (MRASFVVTAPLLAAAVHGYA) form the signal peptide. D33 acts as the Proton acceptor in catalysis. E217 serves as the catalytic Proton donor.

The protein belongs to the glycosyl hydrolase 43 family.

It is found in the secreted. It catalyses the reaction Endohydrolysis of (1-&gt;5)-alpha-arabinofuranosidic linkages in (1-&gt;5)-arabinans.. It functions in the pathway glycan metabolism; L-arabinan degradation. Functionally, endo-1,5-alpha-L-arabinanase involved in degradation of pectin. Its preferred substrate is linear 1,5-alpha-L-arabinan. The protein is Probable arabinan endo-1,5-alpha-L-arabinosidase A (abnA) of Aspergillus terreus (strain NIH 2624 / FGSC A1156).